Reading from the N-terminus, the 218-residue chain is GTP cyclohydrolase 1 (218 aa).

C107, H110, and C178 together coordinate Zn(2+).

It belongs to the GTP cyclohydrolase I family. Homomer.

It catalyses the reaction GTP + H2O = 7,8-dihydroneopterin 3'-triphosphate + formate + H(+). It participates in cofactor biosynthesis; 7,8-dihydroneopterin triphosphate biosynthesis; 7,8-dihydroneopterin triphosphate from GTP: step 1/1. In Azorhizobium caulinodans (strain ATCC 43989 / DSM 5975 / JCM 20966 / LMG 6465 / NBRC 14845 / NCIMB 13405 / ORS 571), this protein is GTP cyclohydrolase 1.